We begin with the raw amino-acid sequence, 86 residues long: Serine protease inhibitor Kazal-type 4 (86 aa).

The first 26 residues, 1–26 (MAVRLWVVALALAALFIVDREVPVSA), serve as a signal peptide directing secretion. The Kazal-like domain occupies 31 to 86 (FSRMPICEHMTESPDCSRIYDPVCGTDGVTYESECKLCLARIENKQDIQIVKDGEC). Disulfide bonds link cysteine 37-cysteine 68, cysteine 46-cysteine 65, and cysteine 54-cysteine 86.

Synthesized in duodenal goblet cells and in monocytes in bone marrow and blood.

The protein resides in the secreted. In terms of biological role, inhibits the glucose-induced insulin secretion from perfused pancreas; also plays a role in the immune system. Does not inhibit trypsin. The sequence is that of Serine protease inhibitor Kazal-type 4 (SPINK4) from Sus scrofa (Pig).